Consider the following 188-residue polypeptide: V-type proton ATPase subunit E (188 aa).

This sequence belongs to the V-ATPase E subunit family.

Its function is as follows. Produces ATP from ADP in the presence of a proton gradient across the membrane. The polypeptide is V-type proton ATPase subunit E (Dictyoglomus thermophilum (strain ATCC 35947 / DSM 3960 / H-6-12)).